A 276-amino-acid polypeptide reads, in one-letter code: MRAARTKSMRIITLLAAIVACAHFIPFYILLTTSLKAKGDYSSKWIFPADISFHNFSEAWERASLGNSFINTMIITGFSALLLIIFGSLAAYPLARRETKLNKAVFALLISIMIIPPLTSMVPLYRMVVDAGMVNTHAIAIFINTAAYMPLTVFLYSGFIRSTIPKELVEAARIDGAGMLKIFFTIVFPLLKPITATICIISCVFIWNDYQFAIFFLQDQKVQTLTVAMAGFFGENANNLHLVAAAALMAMLPMVVLFLALQKYFIAGLSSGAVKG.

The next 6 helical transmembrane spans lie at 11–31, 74–94, 104–124, 139–159, 186–206, and 240–260; these read IITL…YILL, IITG…AYPL, AVFA…MVPL, IAIF…YSGF, IVFP…CVFI, and LHLV…LFLA. The ABC transmembrane type-1 domain maps to 69–261; it reads FINTMIITGF…LPMVVLFLAL (193 aa).

It belongs to the binding-protein-dependent transport system permease family. In terms of assembly, the complex is composed of two ATP-binding proteins (MsmX), two transmembrane proteins (MelC and MelD) and a solute-binding protein (MelE).

The protein resides in the cell membrane. Functionally, part of the ABC transporter complex MelEDC-MsmX involved in melibiose, raffinose and stachyose import. Probably responsible for the translocation of the substrate across the membrane. The polypeptide is Melibiose/raffinose/stachyose import permease protein MelC (Bacillus subtilis (strain 168)).